The chain runs to 400 residues: Glycine betaine/proline betaine transport system ATP-binding protein ProV (400 aa).

An ABC transporter domain is found at 29-265 (LSKEQILEKT…PANDYVRTFF (237 aa)). An ATP-binding site is contributed by 61–68 (GLSGSGKS). CBS domains lie at 282-341 (RTPN…GLDA) and 343-400 (LIDA…VNNG).

Belongs to the ABC transporter superfamily. As to quaternary structure, the complex is composed of two ATP-binding proteins (ProV), two transmembrane proteins (ProW) and a solute-binding protein (ProX).

The protein resides in the cell inner membrane. Functionally, part of the ProU ABC transporter complex involved in glycine betaine and proline betaine uptake. Probably responsible for energy coupling to the transport system. In Escherichia coli (strain K12), this protein is Glycine betaine/proline betaine transport system ATP-binding protein ProV.